A 123-amino-acid polypeptide reads, in one-letter code: Altered inheritance of mitochondria protein 4 (123 aa).

Basic and acidic residues predominate over residues 1-16 (MDQKKDPSNNLTERRV). The interval 1 to 42 (MDQKKDPSNNLTERRVSKVQRPNKKKVRNQVESLSRNLERNK) is disordered. Basic residues predominate over residues 17–28 (SKVQRPNKKKVR).

This sequence belongs to the AIM4 family. In terms of assembly, may interact with the nuclear pore complex.

It localises to the cytoplasm. The chain is Altered inheritance of mitochondria protein 4 (AIM4) from Saccharomyces cerevisiae (strain ATCC 204508 / S288c) (Baker's yeast).